A 264-amino-acid chain; its full sequence is Type III pantothenate kinase (264 aa).

6–13 provides a ligand contact to ATP; it reads DVRNTSIE. 109–112 provides a ligand contact to substrate; it reads GADR. Residue Asp-111 is the Proton acceptor of the active site. Residue Asp-131 coordinates K(+). Thr-134 is a binding site for ATP. Residue Thr-185 coordinates substrate.

The protein belongs to the type III pantothenate kinase family. In terms of assembly, homodimer. NH4(+) is required as a cofactor. It depends on K(+) as a cofactor.

The protein localises to the cytoplasm. The catalysed reaction is (R)-pantothenate + ATP = (R)-4'-phosphopantothenate + ADP + H(+). The protein operates within cofactor biosynthesis; coenzyme A biosynthesis; CoA from (R)-pantothenate: step 1/5. In terms of biological role, catalyzes the phosphorylation of pantothenate (Pan), the first step in CoA biosynthesis. This chain is Type III pantothenate kinase, found in Nocardia farcinica (strain IFM 10152).